We begin with the raw amino-acid sequence, 539 residues long: Phosphoenolpyruvate carboxykinase (ATP) (539 aa).

Arg-64, Tyr-206, and Lys-212 together coordinate substrate. Residues Lys-212, His-231, and 247–255 (GLSGTGKTT) contribute to the ATP site. Mn(2+)-binding residues include Lys-212 and His-231. Asp-268 is a Mn(2+) binding site. Residues Glu-296, Arg-332, 448–449 (RI), and Thr-454 each bind ATP. Residue Arg-332 participates in substrate binding.

The protein belongs to the phosphoenolpyruvate carboxykinase (ATP) family. Monomer. It depends on Mn(2+) as a cofactor.

Its subcellular location is the cytoplasm. The catalysed reaction is oxaloacetate + ATP = phosphoenolpyruvate + ADP + CO2. Its pathway is carbohydrate biosynthesis; gluconeogenesis. In terms of biological role, involved in the gluconeogenesis. Catalyzes the conversion of oxaloacetate (OAA) to phosphoenolpyruvate (PEP) through direct phosphoryl transfer between the nucleoside triphosphate and OAA. This Pectobacterium atrosepticum (strain SCRI 1043 / ATCC BAA-672) (Erwinia carotovora subsp. atroseptica) protein is Phosphoenolpyruvate carboxykinase (ATP).